The following is an 856-amino-acid chain: Rab effector MyRIP (856 aa).

In terms of domain architecture, RabBD spans 4–124 (KLDLSGLTDD…TQSLEWFYNN (121 aa)). The FYVE-type zinc-finger motif lies at 63–105 (CCMRCCSPFTFLVNARRRCGECKFSVCKSCCSYQKHEKLWVCC). The interval 143 to 560 (KKHRLESGAC…AQVSDNVSET (418 aa)) is myosin-binding. A PKA-binding region spans residues 193 to 209 (VALQVAEEAIEEAISKA). The segment at 232-248 (LAEELAGTILQRIIRKQ) is negative regulation of PKA-binding. The segment at 251–287 (KADLHAEEEEPECTRPQSSGVKARGEGTAAPPGRHKA) is disordered. Serine 299 carries the post-translational modification Phosphoserine. Residues 302–311 (TEDTLKTSSA) show a composition bias toward polar residues. Disordered stretches follow at residues 302-323 (TEDT…DRAQ), 350-376 (QSPD…KPKS), 392-578 (YDEL…SAEE), 592-625 (SEKE…NNQG), 778-805 (RRDQ…APPV), and 826-845 (LLQG…TKDL). A Phosphoserine modification is found at serine 351. Acidic residues predominate over residues 395 to 405 (LGSDSEEDFDY). 2 stretches are compositionally biased toward low complexity: residues 427-437 (PAQAQSSGQGP) and 450-460 (SDSETSSTSSS). The actin-binding stretch occupies residues 495-856 (FNPQAAGGET…EPVLESAVMY (362 aa)). Composition is skewed to polar residues over residues 551–574 (AQVS…SSTD), 613–625 (QKGS…NNQG), 784–793 (RSQVQTIDTS), and 826–843 (LLQG…SNTK).

As to quaternary structure, binds MYO5A, MYO7A and F-actin. Binds RAB27A that has been activated by GTP-binding via its N-terminus. Interacts with PRKAR2A. Interacts with components of the exocyst complex, including EXOC3 and EXOC4.

The protein resides in the cytoplasm. It is found in the perinuclear region. It localises to the cytoplasmic vesicle. The protein localises to the secretory vesicle. Its subcellular location is the melanosome. Its function is as follows. Rab effector protein involved in melanosome transport. Serves as link between melanosome-bound RAB27A and the motor proteins MYO5A and MYO7A. May link RAB27A-containing vesicles to actin filaments. Functions as a protein kinase A-anchoring protein (AKAP). May act as a scaffolding protein that links PKA to components of the exocytosis machinery, thus facilitating exocytosis, including insulin release. This is Rab effector MyRIP (Myrip) from Rattus norvegicus (Rat).